Consider the following 317-residue polypeptide: Protoheme IX farnesyltransferase (317 aa).

9 consecutive transmembrane segments (helical) span residues 39 to 58, 62 to 84, 100 to 120, 123 to 143, 160 to 180, 184 to 204, 233 to 253, 256 to 276, and 293 to 313; these read VMSL…PGSL, LGAI…NMWY, IPAG…LAVG, LVMW…AIFF, IVIG…AVTG, LMPV…FWSL, IMAY…LGDT, VYGL…WRVL, and ARAA…ALAV.

The protein belongs to the UbiA prenyltransferase family. Protoheme IX farnesyltransferase subfamily.

It is found in the cell inner membrane. The catalysed reaction is heme b + (2E,6E)-farnesyl diphosphate + H2O = Fe(II)-heme o + diphosphate. It functions in the pathway porphyrin-containing compound metabolism; heme O biosynthesis; heme O from protoheme: step 1/1. Converts heme B (protoheme IX) to heme O by substitution of the vinyl group on carbon 2 of heme B porphyrin ring with a hydroxyethyl farnesyl side group. The chain is Protoheme IX farnesyltransferase from Granulibacter bethesdensis (strain ATCC BAA-1260 / CGDNIH1).